A 331-amino-acid polypeptide reads, in one-letter code: ABSCISIC ACID-INSENSITIVE 5-like protein 1 (331 aa).

Serine 40 and serine 98 each carry phosphoserine. The residue at position 143 (threonine 143) is a Phosphothreonine. The 64-residue stretch at 247 to 310 folds into the bZIP domain; the sequence is MERRQRRMIK…RQEIISRSKQ (64 aa). Positions 249–268 are basic motif; it reads RRQRRMIKNRESAARSRARR. The leucine-zipper stretch occupies residues 275 to 289; the sequence is LELELNNLTEENTKL. Basic and acidic residues predominate over residues 296–320; that stretch reads NEKKRRQEIISRSKQVTKEKSGDKL. The interval 296–331 is disordered; the sequence is NEKKRRQEIISRSKQVTKEKSGDKLRKIRRMASAGW.

Belongs to the bZIP family. ABI5 subfamily. DNA-binding heterodimer with AREB3/DPBF3 or EEL/DPBF4. Interacts with the AFP proteins AFP1, AFP2 and AFP3. As to expression, predominantly expressed in seeds.

The protein resides in the nucleus. Could participate in abscisic acid-regulated gene expression during seed development. In Arabidopsis thaliana (Mouse-ear cress), this protein is ABSCISIC ACID-INSENSITIVE 5-like protein 1 (DPBF2).